A 312-amino-acid polypeptide reads, in one-letter code: Glycerol-3-phosphate dehydrogenase [NAD(P)+] (312 aa).

4 residues coordinate NADPH: W11, R30, R31, and K95. Sn-glycerol 3-phosphate is bound by residues K95, G123, and S125. Position 127 (A127) interacts with NADPH. The sn-glycerol 3-phosphate site is built by K177, D230, S240, R241, and N242. K177 serves as the catalytic Proton acceptor. R241 provides a ligand contact to NADPH. Residues V265 and E267 each coordinate NADPH.

It belongs to the NAD-dependent glycerol-3-phosphate dehydrogenase family.

It localises to the cytoplasm. It catalyses the reaction sn-glycerol 3-phosphate + NAD(+) = dihydroxyacetone phosphate + NADH + H(+). The catalysed reaction is sn-glycerol 3-phosphate + NADP(+) = dihydroxyacetone phosphate + NADPH + H(+). Its pathway is membrane lipid metabolism; glycerophospholipid metabolism. Catalyzes the reduction of the glycolytic intermediate dihydroxyacetone phosphate (DHAP) to sn-glycerol 3-phosphate (G3P), the key precursor for phospholipid synthesis. The protein is Glycerol-3-phosphate dehydrogenase [NAD(P)+] of Helicobacter acinonychis (strain Sheeba).